The following is a 145-amino-acid chain: Flagellar assembly factor FliW (145 aa).

It belongs to the FliW family. Interacts with translational regulator CsrA and flagellin(s).

It localises to the cytoplasm. Acts as an anti-CsrA protein, binds CsrA and prevents it from repressing translation of its target genes, one of which is flagellin. Binds to flagellin and participates in the assembly of the flagellum. The protein is Flagellar assembly factor FliW of Thermosipho africanus (strain TCF52B).